The sequence spans 843 residues: uncharacterized protein (843 aa).

A DNA-binding region (zn(2)-C6 fungal-type) is located at residues 15 to 42 (CLRCKQRKIKCDKLWPTCSKCKASSSIC).

Its subcellular location is the nucleus. In terms of biological role, required for growth on non-fermentable carbon sources. This is an uncharacterized protein from Saccharomyces cerevisiae (strain ATCC 204508 / S288c) (Baker's yeast).